The following is a 495-amino-acid chain: Pre-glycoprotein polyprotein GP complex (495 aa).

The N-myristoyl glycine; by host moiety is linked to residue glycine 2. Over 2-17 the chain is Extracellular; sequence GQFISFMQEIPIFLQE. Residues 18–33 traverse the membrane as a helical segment; that stretch reads ALNIALVAVSLICIVK. Residues 34 to 58 lie on the Cytoplasmic side of the membrane; sequence GLVNLYRCGLFQLMVFLVLAGRSCS. Cysteine 57 provides a ligand contact to Zn(2+). At 59 to 434 the chain is on the extracellular side; sequence EETFKIGMHT…QGRTPITLVD (376 aa). 4 disulfide bridges follow: cysteine 92/cysteine 236, cysteine 281/cysteine 294, cysteine 303/cysteine 312, and cysteine 366/cysteine 387. N-linked (GlcNAc...) asparagine; by host glycans are attached at residues asparagine 95 and asparagine 188. Asparagine 367, asparagine 375, asparagine 392, and asparagine 397 each carry an N-linked (GlcNAc...) asparagine; by host glycan. A helical transmembrane segment spans residues 435-455; it reads ICFWSTVFFTSTLFLHLIGFP. Residues 456–495 are Cytoplasmic-facing; sequence THEHIRGEGCPLPHRLNSMGGCRCGKYLPLKKPTIWHRRH. Zn(2+)-binding residues include histidine 457, histidine 459, cysteine 465, histidine 469, cysteine 477, cysteine 479, and histidine 495.

Belongs to the arenaviridae GPC protein family. Interacts with glycoprotein G2. Part of the GP complex (GP-C) together with glycoprotein G1 and glycoprotein G2. The GP-complex interacts with protein Z, which interacts with ribonucleocapsid; these interactions may induce virion budding. As to quaternary structure, homotrimer; disulfide-linked. In pre-fusion state, G1 homotrimers bind G2 homotrimers via ionic interactions. Part of the GP complex (GP-C) together with glycoprotein G2 and the stable signal peptide. The GP-complex interacts with protein Z, which interacts with ribonucleocapsid; these interactions may induce virion budding. In terms of assembly, homotrimer. Interacts with the stable signal peptide. In pre-fusion state, G2 homotrimers bind G1 homotrimers via ionic interactions. Part of the GP complex (GP-C) together with glycoprotein G1 and the stable signal peptide. Acidification in the endosome triggers rearrangements, which ultimately leads to a 6 helix bundle formed by the two heptad repeat domains (HR1 and HR2) in post-fusion state. The GP-complex interacts with protein Z, which interacts with ribonucleocapsid; these interactions may induce virion budding. In terms of processing, specific enzymatic cleavages in vivo yield mature proteins. GP-C polyprotein is cleaved in the endoplasmic reticulum by the host protease MBTPS1. Only cleaved glycoprotein is incorporated into virions. Post-translationally, the SSP remains stably associated with the GP complex following cleavage by signal peptidase and plays crucial roles in the trafficking of GP through the secretory pathway. Myristoylation is necessary for GP2-mediated fusion activity.

The protein localises to the virion membrane. The protein resides in the host endoplasmic reticulum membrane. It is found in the host Golgi apparatus membrane. It localises to the host cell membrane. Its function is as follows. Functions as a cleaved signal peptide that is retained as the third component of the GP complex (GP-C). Helps to stabilize the spike complex in its native conformation. The SSP is required for efficient glycoprotein expression, post-translational maturation cleavage of G1 and G2, glycoprotein transport to the cell surface plasma membrane, formation of infectious virus particles, and acid pH-dependent glycoprotein-mediated cell fusion. Functionally, forms the virion spikes together with glycoprotein G2. The glycoprotein spike trimers are connected to the underlying matrix. Interacts with the host receptor leading to virus endocytosis. Forms the virion spikes together with glycoprotein G1. The glycoprotein spike trimers are connected to the underlying matrix. Class I viral fusion protein that directs fusion of viral and host endosomal membranes, leading to delivery of the nucleocapsid into the cytoplasm. Membrane fusion is mediated by irreversible conformational changes induced by acidification. The protein is Pre-glycoprotein polyprotein GP complex of Tacaribe virus (strain Franze-Fernandez) (TCRV).